A 690-amino-acid chain; its full sequence is Xylosyl- and glucuronyltransferase LARGE2 (690 aa).

The Cytoplasmic segment spans residues M1 to R8. Residues A9–G29 traverse the membrane as a helical; Signal-anchor for type II membrane protein segment. The Lumenal segment spans residues R30 to A690. N-linked (GlcNAc...) asparagine glycosylation is found at N51 and N78. The interval L68 to R343 is xylosyltransferase activity. Mn(2+) is bound by residues D172 and D174. A glycan (N-linked (GlcNAc...) asparagine) is linked at N202. The segment at R344–A686 is glucuronyltransferase activity. Mn(2+) is bound by residues D492 and D494.

The protein in the C-terminal section; belongs to the glycosyltransferase 49 family. This sequence in the N-terminal section; belongs to the glycosyltransferase 8 family. Belongs to the glycosyltransferase 8 family. In terms of assembly, interacts with B4GAT1. The cofactor is Mn(2+). Highly expressed in the testis and kidney, but weakly expressed in the heart and brain. Expressed during embryogenesis from 7 dpc.

Its subcellular location is the golgi apparatus membrane. It carries out the reaction 3-O-[beta-D-GlcA-(1-&gt;3)-beta-D-Xyl-(1-&gt;4)-Rib-ol-P-Rib-ol-P-3-beta-D-GalNAc-(1-&gt;3)-beta-D-GlcNAc-(1-&gt;4)-(O-6-P-alpha-D-Man)]-Thr-[protein] + UDP-alpha-D-xylose = 3-O-[alpha-D-Xyl-(1-&gt;3)-beta-D-GlcA-(1-&gt;4)-beta-D-Xyl-(1-&gt;4)-Rib-ol-P-Rib-ol-P-3-beta-D-GalNAc-(1-&gt;3)-beta-D-GlcNAc-(1-&gt;4)-(O-6-P-alpha-D-Man)]-Thr-[protein] + UDP + H(+). It catalyses the reaction 3-O-{(1-&gt;[3)-alpha-D-Xyl-(1-&gt;3)-beta-D-GlcA-(1-&gt;](n)-4)-beta-D-Xyl-(1-&gt;4)-Rib-ol-P-Rib-ol-P-3-beta-D-GalNAc-(1-&gt;3)-beta-D-GlcNAc-(1-&gt;4)-O-6-P-alpha-D-Man}-L-Thr-[protein] + UDP-alpha-D-glucuronate = 3-O-{beta-D-GlcA-(1-&gt;[3)-alpha-D-Xyl-(1-&gt;3)-beta-D-GlcA-(1-&gt;](n)-4)-beta-D-Xyl-(1-&gt;4)-Rib-ol-P-Rib-ol-P-3-beta-D-GalNAc-(1-&gt;3)-beta-D-GlcNAc-(1-&gt;4)-O-6-P-alpha-D-Man}-L-Thr-[protein] + UDP + H(+). The enzyme catalyses 3-O-{beta-D-GlcA-(1-&gt;[3)-alpha-D-Xyl-(1-&gt;3)-beta-D-GlcA-(1-&gt;](n)-4)-beta-D-Xyl-(1-&gt;4)-Rib-ol-P-Rib-ol-P-3-beta-D-GalNAc-(1-&gt;3)-beta-D-GlcNAc-(1-&gt;4)-O-6-P-alpha-D-Man}-L-Thr-[protein] + UDP-alpha-D-xylose = 3-O-{(1-&gt;[3)-alpha-D-Xyl-(1-&gt;3)-beta-D-GlcA-(1-&gt;](n+1)-4)-beta-D-Xyl-(1-&gt;4)-Rib-ol-P-Rib-ol-P-3-beta-D-GalNAc-(1-&gt;3)-beta-D-GlcNAc-(1-&gt;4)-O-6-P-alpha-D-Man}-L-Thr-[protein] + UDP + H(+). The protein operates within protein modification; protein glycosylation. In terms of biological role, bifunctional glycosyltransferase with both alpha-1,3-xylosyltransferase and beta-1,3-glucuronyltransferase activities involved in the maturation of alpha-dystroglycan (DAG1) by glycosylation leading to DAG1 binding to laminin G-like domain-containing extracellular proteins with high affinity and in a phosphorylated-O-mannosyl trisaccharide dependent manner. Elongates the glucuronyl-beta-1,4-xylose-beta disaccharide primer structure by adding repeating units [-3-Xylose-alpha-1,3-GlcA-beta-1-] to produce a heteropolysaccharide. Supports the maturation of DAG1 more effectively than LARGE1. In addition, can modify both heparan sulfate (HS)- and chondroitin/dermatan sulfate (CS/DS)-proteoglycans (PGs), namely GPC4, with a glycosaminoglycan (GAG)-like polysaccharide composed of xylose and glucuronic acid to confer laminin binding. The polypeptide is Xylosyl- and glucuronyltransferase LARGE2 (Mus musculus (Mouse)).